A 222-amino-acid chain; its full sequence is N-(5'-phosphoribosyl)anthranilate isomerase (222 aa).

It belongs to the TrpF family.

The catalysed reaction is N-(5-phospho-beta-D-ribosyl)anthranilate = 1-(2-carboxyphenylamino)-1-deoxy-D-ribulose 5-phosphate. It functions in the pathway amino-acid biosynthesis; L-tryptophan biosynthesis; L-tryptophan from chorismate: step 3/5. In Rhizobium leguminosarum bv. trifolii (strain WSM2304), this protein is N-(5'-phosphoribosyl)anthranilate isomerase.